We begin with the raw amino-acid sequence, 160 residues long: Nitrate reductase [NADH] (160 aa).

Position 37 (T37) interacts with FAD.

It belongs to the nitrate reductase family. As to quaternary structure, homodimer. Requires FAD as cofactor. Heme serves as cofactor. The cofactor is Mo-molybdopterin.

The catalysed reaction is nitrite + NAD(+) + H2O = nitrate + NADH + H(+). Nitrate reductase is a key enzyme involved in the first step of nitrate assimilation in plants, fungi and bacteria. This chain is Nitrate reductase [NADH] (NIA), found in Lotus tetragonolobus (Winged pea).